We begin with the raw amino-acid sequence, 154 residues long: Transcriptional repressor NrdR (154 aa).

A zinc finger spans residues 3–34 (CPTCKYNGTRVVDSRPADDGNSIRRRRECEKC). The ATP-cone domain occupies 49–139 (LIVVKKDGAR…VYRQFKDISV (91 aa)).

This sequence belongs to the NrdR family. It depends on Zn(2+) as a cofactor.

Its function is as follows. Negatively regulates transcription of bacterial ribonucleotide reductase nrd genes and operons by binding to NrdR-boxes. This chain is Transcriptional repressor NrdR, found in Listeria innocua serovar 6a (strain ATCC BAA-680 / CLIP 11262).